The chain runs to 257 residues: Glutamate racemase (257 aa).

Residues D12 to S13 and Y44 to G45 contribute to the substrate site. C75 (proton donor/acceptor) is an active-site residue. Substrate is bound at residue N76 to T77. C176 (proton donor/acceptor) is an active-site residue. T177–H178 is a substrate binding site.

Belongs to the aspartate/glutamate racemases family.

It catalyses the reaction L-glutamate = D-glutamate. The protein operates within cell wall biogenesis; peptidoglycan biosynthesis. Functionally, provides the (R)-glutamate required for cell wall biosynthesis. This chain is Glutamate racemase, found in Thermus thermophilus (strain ATCC 27634 / DSM 579 / HB8).